A 113-amino-acid polypeptide reads, in one-letter code: U11-theraphotoxin-Hhn1a (113 aa).

A signal peptide spans 1-21; sequence MNTVRVTFLLVFVLPVSLGQA. Positions 22-74 are excised as a propeptide; the sequence is DKDENRMEMQEKTEQGKSYLDFAENLLLQKLEELEAKLLEEDSEESRNSRQKR. The segment covering 60–69 has biased composition (basic and acidic residues); the sequence is LEEDSEESRN. The interval 60-83 is disordered; it reads LEEDSEESRNSRQKRCIGEGVPCD. 3 disulfides stabilise this stretch: cysteine 75/cysteine 90, cysteine 82/cysteine 95, and cysteine 89/cysteine 110.

Belongs to the neurotoxin 14 (magi-1) family. 01 (HNTX-16) subfamily. As to expression, expressed by the venom gland.

Its subcellular location is the secreted. In terms of biological role, probable ion channel inhibitor. This is U11-theraphotoxin-Hhn1a from Cyriopagopus hainanus (Chinese bird spider).